We begin with the raw amino-acid sequence, 483 residues long: Xylulose kinase (483 aa).

77–78 (MH) is a binding site for substrate. The Proton acceptor role is filled by Asp-233.

It belongs to the FGGY kinase family.

It carries out the reaction D-xylulose + ATP = D-xylulose 5-phosphate + ADP + H(+). In terms of biological role, catalyzes the phosphorylation of D-xylulose to D-xylulose 5-phosphate. This Klebsiella pneumoniae protein is Xylulose kinase.